Consider the following 547-residue polypeptide: Glucose-6-phosphate isomerase (547 aa).

Residue Glu351 is the Proton donor of the active site. Residues His382 and Lys511 contribute to the active site.

Belongs to the GPI family.

It localises to the cytoplasm. It catalyses the reaction alpha-D-glucose 6-phosphate = beta-D-fructose 6-phosphate. The protein operates within carbohydrate biosynthesis; gluconeogenesis. Its pathway is carbohydrate degradation; glycolysis; D-glyceraldehyde 3-phosphate and glycerone phosphate from D-glucose: step 2/4. Its function is as follows. Catalyzes the reversible isomerization of glucose-6-phosphate to fructose-6-phosphate. The chain is Glucose-6-phosphate isomerase from Xanthobacter autotrophicus (strain ATCC BAA-1158 / Py2).